Reading from the N-terminus, the 199-residue chain is Ras-related protein Rab-7b (199 aa).

Residues 15–22, 34–40, 63–67, 124–127, and 154–155 contribute to the GTP site; these read GALGVGKT, FEEYQTT, DTGGQ, NKID, and AK. Short sequence motifs (switch) lie at residues 28–41 and 67–82; these read YVHK…QTTL and QERF…KGSD. Phosphoserine is present on serine 186. Residues cysteine 198 and cysteine 199 are each lipidated (S-geranylgeranyl cysteine).

This sequence belongs to the small GTPase superfamily. Rab family.

The protein resides in the late endosome. Its subcellular location is the lysosome. It localises to the golgi apparatus. It is found in the trans-Golgi network. The protein localises to the cytoplasmic vesicle. The protein resides in the phagosome. Its subcellular location is the phagosome membrane. In terms of biological role, controls vesicular trafficking from endosomes to the trans-Golgi network (TGN). Acts as a negative regulator of TLR9 signaling and can suppress TLR9-triggered TNFA, IL6, and IFNB production in macrophages by promoting TLR9 lysosomal degradation. Also negatively regulates TLR4 signaling in macrophages by promoting lysosomal degradation of TLR4. Promotes megakaryocytic differentiation by increasing NF-kappa-B-dependent IL6 production and subsequently enhancing the association of STAT3 with GATA1. Not involved in the regulation of the EGF- and EGFR degradation pathway. This Mus musculus (Mouse) protein is Ras-related protein Rab-7b (Rab7b).